Reading from the N-terminus, the 105-residue chain is Pyruvate synthase subunit PorD (105 aa).

4Fe-4S ferredoxin-type domains are found at residues 44–73 (FRPEFKKDKCVRCFLCYIYCPEPAIYLDEE) and 74–103 (GYPVFDYDYCKGCGICANECPTNAIEMVRE). Positions 53, 56, 59, 63, 83, 86, 89, and 93 each coordinate [4Fe-4S] cluster.

Heterotetramer of one alpha, one beta, one delta and one gamma chain. [4Fe-4S] cluster is required as a cofactor.

The polypeptide is Pyruvate synthase subunit PorD (porD) (Pyrococcus abyssi (strain GE5 / Orsay)).